Here is a 199-residue protein sequence, read N- to C-terminus: MAKLDTLKAALEKALGKRVQNLVEATGELTLIVKADDYLDVAQILRDDPSLRFEQLIDLCGVDYLEYADGAWDGPRFAAVSQLLSVTHNWRLRLRAFASDDDFPVLPSLINVWNSVNWFEREAFDFYGIVFDGHPDLRRILTDYGFVGHPFRKDFPVSGFVEMRYDPDQKRVIYQPVTIEPRELTPRVIREDKYGGVEH.

It belongs to the complex I 30 kDa subunit family. NDH-1 is composed of 14 different subunits. Subunits NuoB, C, D, E, F, and G constitute the peripheral sector of the complex.

The protein resides in the cell inner membrane. It catalyses the reaction a quinone + NADH + 5 H(+)(in) = a quinol + NAD(+) + 4 H(+)(out). Its function is as follows. NDH-1 shuttles electrons from NADH, via FMN and iron-sulfur (Fe-S) centers, to quinones in the respiratory chain. The immediate electron acceptor for the enzyme in this species is believed to be ubiquinone. Couples the redox reaction to proton translocation (for every two electrons transferred, four hydrogen ions are translocated across the cytoplasmic membrane), and thus conserves the redox energy in a proton gradient. This Cupriavidus taiwanensis (strain DSM 17343 / BCRC 17206 / CCUG 44338 / CIP 107171 / LMG 19424 / R1) (Ralstonia taiwanensis (strain LMG 19424)) protein is NADH-quinone oxidoreductase subunit C.